Consider the following 800-residue polypeptide: MMHSSSVRRMITVKWSLCLIFCLTNSILVSAKHLCLPDQKDSLWGFKNEFNVPSPHSYAMTEKWRNNTDCCSWDGVSCDPKTGVVVELDLQYSHLNGPLRSNSSLFRLQHLQKLVLGSNHLSGILPDSIGNLKRLKVLVLVNCNLFGKIPSSLGNLSYLTHLDLSYNDFTSEGPDSMGNLNRLTDMLLKLSSVTWIDLGDNQLKGMLPSNMSSLSKLEAFDISGNSFSGTIPSSLFMIPSLILLHLGRNDFSGPFEIGNISSPSNLQLLNIGRNNFNPDIVDLSIFSPLLSLGYLDVSGINLKISSTVSLPSPIEYLGLLSCNISEFPKFLRNQTSLEYLDISANQIEGQVPEWLWSLPELRYVNISHNSFNGFEGPADVIQGGRELLVLDISSNIFQDPFPLLPVVSMNYLFSSNNRFSGEIPKTICELDNLRILVLSNNNFSGSIPRCFENLHLYVLHLRNNNLSGIFPEEAISHHLQSFDVGHNLFSGELPKSLINCSDIEFLNVEDNRINDTFPSWLELLPNLQILVLRSNEFYGPIFSPGDSLSFSRLRIFDISENRFTGVLPSDYFVGWSVMSSVVDIDGRIIQYTVTGIDRDFYHKSVALINKGLKMELVGSGFTIYKTIDVSGNRLEGDIPESIGLLKEVIVLSMSNNAFTGHIPPSLSNLSNLQSLDLSQNRLSGSIPGELGKLTFLEWMNFSHNRLEGPIPETTQIQTQDSSSFTENPGLCGAPLLKKCGGEEEATKQEQDEDKEEEDQVFSWIAAAIGYVPGVVCGLTIGHILVSHKRDWFMRIVSFFT.

Residues 1–31 form the signal peptide; the sequence is MMHSSSVRRMITVKWSLCLIFCLTNSILVSA. Topologically, residues 32–759 are extracellular; that stretch reads KHLCLPDQKD…QDEDKEEEDQ (728 aa). N-linked (GlcNAc...) asparagine glycosylation is found at N66 and N102. LRR repeat units lie at residues 109 to 131, 133 to 156, 157 to 179, 190 to 213, 214 to 238, 240 to 262, 263 to 288, 294 to 311, 312 to 334, 335 to 358, 360 to 383, 385 to 406, 407 to 430, 431 to 453, 455 to 477, 479 to 500, 502 to 523, 524 to 550, 551 to 574, 621 to 645, 646 to 669, 670 to 693, and 695 to 718; these read QHLQ…SIGN, KRLK…LGNL, SYLT…SMGN, LSSV…NMSS, LSKL…LFMI, SLIL…NISS, PSNL…IFSP, YLDV…VSLP, SPIE…LRNQ, TSLE…LWSL, ELRY…VIQG, RELL…LLPV, VSMN…ICEL, DNLR…CFEN, HLYV…AISH, LQSF…LINC, DIEF…WLEL, LPNL…SLSF, SRLR…YFVG, FTIY…IGLL, KEVI…LSNL, SNLQ…LGKL, and FLEW…QIQT. N-linked (GlcNAc...) asparagine glycosylation occurs at N155. N210 carries N-linked (GlcNAc...) asparagine glycosylation. Residue N259 is glycosylated (N-linked (GlcNAc...) asparagine). N-linked (GlcNAc...) asparagine glycosylation is found at N323 and N333. Residue N365 is glycosylated (N-linked (GlcNAc...) asparagine). Residues N442, N465, N499, and N514 are each glycosylated (N-linked (GlcNAc...) asparagine). An N-linked (GlcNAc...) asparagine glycan is attached at N668. N700 carries an N-linked (GlcNAc...) asparagine glycan. The helical transmembrane segment at 760–780 threads the bilayer; that stretch reads VFSWIAAAIGYVPGVVCGLTI. The Cytoplasmic segment spans residues 781–800; sequence GHILVSHKRDWFMRIVSFFT.

The protein belongs to the RLP family.

Its subcellular location is the cell membrane. The chain is Receptor-like protein 47 from Arabidopsis thaliana (Mouse-ear cress).